The chain runs to 633 residues: Breast carcinoma-amplified sequence 1 homolog (633 aa).

2 disordered regions span residues 1–34 and 57–422; these read MGNQMSVPLRPGDQEHDPGADTCKVTSDNECVQN and SSKD…KLFW. Composition is skewed to polar residues over residues 24 to 34 and 57 to 68; these read KVTSDNECVQN and SSKDNVATSSPK. A Phosphoserine modification is found at Ser-127. Over residues 278 to 288 the composition is skewed to polar residues; it reads VDTTENSSSIM. The span at 300–318 shows a compositional bias: basic and acidic residues; that stretch reads TETKKDPEDTKATKADSVC. At Ser-328 the chain carries Phosphoserine. The residue at position 330 (Thr-330) is a Phosphothreonine. Residues 359–378 show a composition bias toward polar residues; that stretch reads NSPTTSANLKSDKANFTPQE. At Ser-360 the chain carries Phosphoserine. Positions 400-410 are enriched in basic and acidic residues; that stretch reads SEGRDSGKEKA. Phosphoserine occurs at positions 425 and 443. The tract at residues 454–633 is disordered; sequence ESSLQTVDLS…VSIGPVGKSK (180 aa). The segment covering 471 to 481 has biased composition (basic and acidic residues); that stretch reads TDVKVKEESKP. Positions 510–522 are enriched in polar residues; that stretch reads KDSSCQTSNSVEK. Residue Thr-523 is modified to Phosphothreonine. Ser-525 carries the post-translational modification Phosphoserine. The span at 537-555 shows a compositional bias: basic and acidic residues; it reads KNKETSSSKDKKSVDKKSA. Phosphoserine is present on residues Ser-601 and Ser-615. The tract at residues 614–633 is interacts with DYNLL1 AND DYNLL2; it reads MSDAQVQTDPVSIGPVGKSK.

As to quaternary structure, homodimer. Interacts with DYNLL1 and DYNLL2. Highly expressed in the brain and, more specifically, in oligodendrocytes. Expressed in the Schwann cells (at protein level).

The protein resides in the cytoplasm. Required for myelination. This chain is Breast carcinoma-amplified sequence 1 homolog (Bcas1), found in Mus musculus (Mouse).